Consider the following 444-residue polypeptide: ATP-dependent protease ATPase subunit HslU (444 aa).

ATP-binding positions include Ile-20 and 62-67 (GVGKTE). Residues 130–158 (EDRILDALVPPPRGASGEPERGEDNSARQ) form a disordered region. Asp-257, Glu-322, and Arg-394 together coordinate ATP.

It belongs to the ClpX chaperone family. HslU subfamily. As to quaternary structure, a double ring-shaped homohexamer of HslV is capped on each side by a ring-shaped HslU homohexamer. The assembly of the HslU/HslV complex is dependent on binding of ATP.

The protein resides in the cytoplasm. Its function is as follows. ATPase subunit of a proteasome-like degradation complex; this subunit has chaperone activity. The binding of ATP and its subsequent hydrolysis by HslU are essential for unfolding of protein substrates subsequently hydrolyzed by HslV. HslU recognizes the N-terminal part of its protein substrates and unfolds these before they are guided to HslV for hydrolysis. The chain is ATP-dependent protease ATPase subunit HslU from Bordetella parapertussis (strain 12822 / ATCC BAA-587 / NCTC 13253).